A 181-amino-acid chain; its full sequence is ATP-dependent protease subunit HslV (181 aa).

Residue Thr5 is part of the active site. Positions 161, 164, and 167 each coordinate Na(+).

The protein belongs to the peptidase T1B family. HslV subfamily. In terms of assembly, a double ring-shaped homohexamer of HslV is capped on each side by a ring-shaped HslU homohexamer. The assembly of the HslU/HslV complex is dependent on binding of ATP.

The protein resides in the cytoplasm. It catalyses the reaction ATP-dependent cleavage of peptide bonds with broad specificity.. Allosterically activated by HslU binding. Functionally, protease subunit of a proteasome-like degradation complex believed to be a general protein degrading machinery. The chain is ATP-dependent protease subunit HslV from Sulfurimonas denitrificans (strain ATCC 33889 / DSM 1251) (Thiomicrospira denitrificans (strain ATCC 33889 / DSM 1251)).